The primary structure comprises 352 residues: Maleylacetate reductase (352 aa).

Belongs to the iron-containing alcohol dehydrogenase family.

It carries out the reaction 3-oxoadipate + NAD(+) = maleylacetate + NADH + H(+). It catalyses the reaction 3-oxoadipate + NADP(+) = maleylacetate + NADPH + H(+). Its pathway is xenobiotic degradation; (2,4,5-trichlorophenoxy)acetate degradation. The chain is Maleylacetate reductase (tftE) from Burkholderia cepacia (Pseudomonas cepacia).